Consider the following 314-residue polypeptide: tRNA-cytidine(32) 2-sulfurtransferase (314 aa).

A PP-loop motif motif is present at residues 58–63 (SGGKDS). [4Fe-4S] cluster contacts are provided by Cys-133, Cys-136, and Cys-224.

This sequence belongs to the TtcA family. In terms of assembly, homodimer. Requires Mg(2+) as cofactor. It depends on [4Fe-4S] cluster as a cofactor.

The protein resides in the cytoplasm. The catalysed reaction is cytidine(32) in tRNA + S-sulfanyl-L-cysteinyl-[cysteine desulfurase] + AH2 + ATP = 2-thiocytidine(32) in tRNA + L-cysteinyl-[cysteine desulfurase] + A + AMP + diphosphate + H(+). The protein operates within tRNA modification. Its function is as follows. Catalyzes the ATP-dependent 2-thiolation of cytidine in position 32 of tRNA, to form 2-thiocytidine (s(2)C32). The sulfur atoms are provided by the cysteine/cysteine desulfurase (IscS) system. The protein is tRNA-cytidine(32) 2-sulfurtransferase of Polaromonas naphthalenivorans (strain CJ2).